Reading from the N-terminus, the 413-residue chain is Multifunctional CCA protein (413 aa).

ATP-binding residues include Gly-8 and Arg-11. CTP is bound by residues Gly-8 and Arg-11. Mg(2+) is bound by residues Asp-21 and Asp-23. Arg-91, Arg-137, and Arg-140 together coordinate ATP. Positions 91, 137, and 140 each coordinate CTP. Residues 228–329 (TGVHTLMTLS…VKLFDAIDAW (102 aa)) form the HD domain.

The protein belongs to the tRNA nucleotidyltransferase/poly(A) polymerase family. Bacterial CCA-adding enzyme type 1 subfamily. In terms of assembly, monomer. Can also form homodimers and oligomers. It depends on Mg(2+) as a cofactor. The cofactor is Ni(2+).

It catalyses the reaction a tRNA precursor + 2 CTP + ATP = a tRNA with a 3' CCA end + 3 diphosphate. The enzyme catalyses a tRNA with a 3' CCA end + 2 CTP + ATP = a tRNA with a 3' CCACCA end + 3 diphosphate. Functionally, catalyzes the addition and repair of the essential 3'-terminal CCA sequence in tRNAs without using a nucleic acid template. Adds these three nucleotides in the order of C, C, and A to the tRNA nucleotide-73, using CTP and ATP as substrates and producing inorganic pyrophosphate. tRNA 3'-terminal CCA addition is required both for tRNA processing and repair. Also involved in tRNA surveillance by mediating tandem CCA addition to generate a CCACCA at the 3' terminus of unstable tRNAs. While stable tRNAs receive only 3'-terminal CCA, unstable tRNAs are marked with CCACCA and rapidly degraded. This chain is Multifunctional CCA protein, found in Salmonella typhi.